A 227-amino-acid polypeptide reads, in one-letter code: UPF0173 metal-dependent hydrolase BALH_4194 (227 aa).

Belongs to the UPF0173 family.

The protein is UPF0173 metal-dependent hydrolase BALH_4194 of Bacillus thuringiensis (strain Al Hakam).